We begin with the raw amino-acid sequence, 548 residues long: MKLSKKYTFRSRKVLLIILDGVGYSPKGPESGNAIAGAKLPFLNRVWNQFPTLHIQAHGKAVGMPSDDDMGNSEVGHNVLGSGRIFDQGAKLVSNSIASGDIFNGQAWKEVIGNSKKNNSTLHLLGLFSDGNVHSHIDHTKALISQAILEKVPKIRLHILLDGRDVPEKSALDYLNPFETWLNSLRKSGTDIRIASGGGRMTITMDRYEADWSMVERGWKVHVKGEGRYFSSAKEAIETFRSENPKIIDQYLPSFVISDNGKPVGKIQDGDSVVFTNFRGDRAIEISLAFTEKNFDKFDRGPLPNVLYAGIMQYDGDLKLPERFLVAPPAIDRTLGEYMASSNIPQYALSETQKYGHVTYFWNGNKSGYFDQNSEEYREILSDVIPFDQSPEMKALLITEALEKALNENKQDFYRVNYANGDMVGHTGNYLATVQAMEFLDGCVERLWKTCEKQNIVLLVTADHGNADEMFQLDKKGNVEKDSHGNPIPKTSHTLNPVPISILDPENKIRFNSKLSNPGLANVAATILDVMGYETPEGYHPSLIQNES.

The Mn(2+) site is built by aspartate 20 and serine 73. The Phosphoserine intermediate role is filled by serine 73. Substrate contacts are provided by residues histidine 134, 164-165, arginine 200, arginine 207, 279-282, and lysine 354; these read RD and RGDR. Mn(2+) is bound by residues aspartate 422, histidine 426, aspartate 463, histidine 464, and histidine 493.

This sequence belongs to the BPG-independent phosphoglycerate mutase family. In terms of assembly, monomer. Mn(2+) serves as cofactor.

It carries out the reaction (2R)-2-phosphoglycerate = (2R)-3-phosphoglycerate. Its pathway is carbohydrate degradation; glycolysis; pyruvate from D-glyceraldehyde 3-phosphate: step 3/5. In terms of biological role, catalyzes the interconversion of 2-phosphoglycerate and 3-phosphoglycerate. The protein is Probable 2,3-bisphosphoglycerate-independent phosphoglycerate mutase (gpmI) of Leptospira interrogans serogroup Icterohaemorrhagiae serovar copenhageni (strain Fiocruz L1-130).